We begin with the raw amino-acid sequence, 2448 residues long: Cysteine repeat modular protein 1 (2448 aa).

The helical transmembrane segment at 9-29 (TSTNLLNIFALYFSAICFIYC) threads the bilayer. N-linked (GlcNAc...) asparagine glycosylation is found at asparagine 48, asparagine 89, asparagine 248, asparagine 284, asparagine 461, asparagine 503, asparagine 542, asparagine 598, and asparagine 619. FU repeat units follow at residues 431–481 (KNTC…GYYF), 485–530 (FMQC…GFYI), 535–566 (NFKC…FYLS), and 567–611 (SNTC…GQFA). FU repeat units follow at residues 645 to 694 (NNQC…GYFP), 698 to 727 (TSVC…YYLQ), 728 to 772 (DSNC…GTFG), 775 to 813 (QNIC…ITNN), 819 to 868 (KGMC…YYLS), 904 to 947 (GRVC…GFPD), 950 to 983 (QNVC…LNPA), 984 to 1027 (NNIC…RTYP), 1063 to 1109 (QGAC…NQYV), and 1113 to 1144 (QNRC…GFYL). 2 N-linked (GlcNAc...) asparagine glycosylation sites follow: asparagine 761 and asparagine 812. Asparagine 934 is a glycosylation site (N-linked (GlcNAc...) asparagine). Residue asparagine 1002 is glycosylated (N-linked (GlcNAc...) asparagine). An N-linked (GlcNAc...) asparagine glycan is attached at asparagine 1146. One copy of the FU 15 repeat lies at 1147–1193 (QTQCSICDISCLQCSGPGFDSCIQCAQGYYKLGDSVCVQSCPDGFFL). N-linked (GlcNAc...) asparagine glycosylation is present at asparagine 1194. 5 FU repeats span residues 1197 to 1232 (NNQC…ISNQ), 1234 to 1279 (GIIC…GYRS), 1281 to 1332 (KGVC…GTFQ), 1346 to 1394 (SYYC…GFIL), and 1402 to 1436 (NQYC…GTVQ). N-linked (GlcNAc...) asparagine glycans are attached at residues asparagine 1296, asparagine 1328, and asparagine 1365. N-linked (GlcNAc...) asparagine glycans are attached at residues asparagine 1506, asparagine 1601, asparagine 1628, and asparagine 1670. An EGF-like domain is found at 1739–1773 (SDISCSLNLCMNSGKCVPNSIFCSCPSAFTGPKCQ). Intrachain disulfides connect cysteine 1743-cysteine 1754, cysteine 1748-cysteine 1761, and cysteine 1763-cysteine 1772. 7 N-linked (GlcNAc...) asparagine glycosylation sites follow: asparagine 1800, asparagine 1849, asparagine 1877, asparagine 1942, asparagine 2117, asparagine 2155, and asparagine 2179. 2 consecutive transmembrane segments (helical) span residues 2201-2221 (LYIM…YSAI) and 2238-2258 (IYFL…NQFV). An N-linked (GlcNAc...) asparagine glycan is attached at asparagine 2260. 4 consecutive transmembrane segments (helical) span residues 2267–2287 (SLTI…ILPF), 2296–2316 (ILTS…TIGV), 2352–2372 (MIGL…IGLC), and 2386–2406 (AVFL…IIVG).

It localises to the membrane. In terms of biological role, required for mucocyst secretion. The polypeptide is Cysteine repeat modular protein 1 (Tetrahymena thermophila (strain SB210)).